The chain runs to 123 residues: MPPKVSGKAAKKAGKAQKNISKGDKKKNRKRKESYAIYIYKVLKQVHPDTGISSKAMSIMNSFVNDIFERIASEASRLAHYNKRSTITSREIQTAVRLLLPGELAKHAVSEGTKAVTKYTSSK.

The disordered stretch occupies residues 1–30 (MPPKVSGKAAKKAGKAQKNISKGDKKKNRK). An O-linked (GlcNAc) serine glycan is attached at Ser-110. Lys-118 is covalently cross-linked (Glycyl lysine isopeptide (Lys-Gly) (interchain with G-Cter in ubiquitin)).

Belongs to the histone H2B family. The nucleosome is a histone octamer containing two molecules each of H2A, H2B, H3 and H4 assembled in one H3-H4 heterotetramer and two H2A-H2B heterodimers. The octamer wraps approximately 147 bp of DNA. Post-translationally, monoubiquitination of Lys-118 gives a specific tag for epigenetic transcriptional activation and is also prerequisite for histone H3 'Lys-4' and 'Lys-79' methylation. In terms of processing, glcNAcylation at Ser-110 promotes monoubiquitination of Lys-118. It fluctuates in response to extracellular glucose, and associates with transcribed genes.

The protein resides in the nucleus. The protein localises to the chromosome. Functionally, core component of nucleosome. Nucleosomes wrap and compact DNA into chromatin, limiting DNA accessibility to the cellular machineries which require DNA as a template. Histones thereby play a central role in transcription regulation, DNA repair, DNA replication and chromosomal stability. DNA accessibility is regulated via a complex set of post-translational modifications of histones, also called histone code, and nucleosome remodeling. This chain is Histone H2B.3, found in Tigriopus californicus (Marine copepod).